Here is a 190-residue protein sequence, read N- to C-terminus: Elongation factor P (190 aa).

It belongs to the elongation factor P family.

The protein resides in the cytoplasm. It functions in the pathway protein biosynthesis; polypeptide chain elongation. Involved in peptide bond synthesis. Stimulates efficient translation and peptide-bond synthesis on native or reconstituted 70S ribosomes in vitro. Probably functions indirectly by altering the affinity of the ribosome for aminoacyl-tRNA, thus increasing their reactivity as acceptors for peptidyl transferase. This is Elongation factor P from Amoebophilus asiaticus (strain 5a2).